The chain runs to 316 residues: M-phase inducer phosphatase cdc-25.3 (316 aa).

The segment at 35–65 (QNRQHSSAISHISNSSPPTRKRSIDGGYTSG) is disordered. A compositionally biased stretch (low complexity) spans 39 to 50 (HSSAISHISNSS). Residues 136–242 (FMQKYILIDC…FYAFTRGLEK (107 aa)) enclose the Rhodanese domain.

Belongs to the MPI phosphatase family.

The enzyme catalyses O-phospho-L-tyrosyl-[protein] + H2O = L-tyrosyl-[protein] + phosphate. The sequence is that of M-phase inducer phosphatase cdc-25.3 (cdc-25.3) from Caenorhabditis elegans.